A 263-amino-acid chain; its full sequence is Indole-3-glycerol phosphate synthase (263 aa).

The protein belongs to the TrpC family.

It catalyses the reaction 1-(2-carboxyphenylamino)-1-deoxy-D-ribulose 5-phosphate + H(+) = (1S,2R)-1-C-(indol-3-yl)glycerol 3-phosphate + CO2 + H2O. It functions in the pathway amino-acid biosynthesis; L-tryptophan biosynthesis; L-tryptophan from chorismate: step 4/5. The chain is Indole-3-glycerol phosphate synthase from Laribacter hongkongensis (strain HLHK9).